We begin with the raw amino-acid sequence, 301 residues long: Recombination-associated protein RdgC (301 aa).

The protein belongs to the RdgC family.

It localises to the cytoplasm. It is found in the nucleoid. May be involved in recombination. The polypeptide is Recombination-associated protein RdgC (Pseudoalteromonas atlantica (strain T6c / ATCC BAA-1087)).